The chain runs to 107 residues: UPF0122 protein EAT1b_2891 (107 aa).

It belongs to the UPF0122 family.

Functionally, might take part in the signal recognition particle (SRP) pathway. This is inferred from the conservation of its genetic proximity to ftsY/ffh. May be a regulatory protein. In Exiguobacterium sp. (strain ATCC BAA-1283 / AT1b), this protein is UPF0122 protein EAT1b_2891.